Reading from the N-terminus, the 129-residue chain is Translation initiation factor 5A (129 aa).

Hypusine is present on K36.

It belongs to the eIF-5A family.

Its subcellular location is the cytoplasm. Its function is as follows. Functions by promoting the formation of the first peptide bond. The polypeptide is Translation initiation factor 5A (eIF5A) (Methanobrevibacter smithii (strain ATCC 35061 / DSM 861 / OCM 144 / PS)).